Consider the following 560-residue polypeptide: Dihydroxy-acid dehydratase (560 aa).

Cys50 serves as a coordination point for [2Fe-2S] cluster. Asp82 contributes to the Mg(2+) binding site. Cys123 is a binding site for [2Fe-2S] cluster. Mg(2+) contacts are provided by Asp124 and Lys125. Lys125 carries the N6-carboxylysine modification. Residue Cys195 coordinates [2Fe-2S] cluster. Glu447 lines the Mg(2+) pocket. The active-site Proton acceptor is the Ser473.

This sequence belongs to the IlvD/Edd family. As to quaternary structure, homodimer. Requires [2Fe-2S] cluster as cofactor. It depends on Mg(2+) as a cofactor.

It carries out the reaction (2R)-2,3-dihydroxy-3-methylbutanoate = 3-methyl-2-oxobutanoate + H2O. It catalyses the reaction (2R,3R)-2,3-dihydroxy-3-methylpentanoate = (S)-3-methyl-2-oxopentanoate + H2O. The protein operates within amino-acid biosynthesis; L-isoleucine biosynthesis; L-isoleucine from 2-oxobutanoate: step 3/4. Its pathway is amino-acid biosynthesis; L-valine biosynthesis; L-valine from pyruvate: step 3/4. Functions in the biosynthesis of branched-chain amino acids. Catalyzes the dehydration of (2R,3R)-2,3-dihydroxy-3-methylpentanoate (2,3-dihydroxy-3-methylvalerate) into 2-oxo-3-methylpentanoate (2-oxo-3-methylvalerate) and of (2R)-2,3-dihydroxy-3-methylbutanoate (2,3-dihydroxyisovalerate) into 2-oxo-3-methylbutanoate (2-oxoisovalerate), the penultimate precursor to L-isoleucine and L-valine, respectively. The sequence is that of Dihydroxy-acid dehydratase from Thermosynechococcus vestitus (strain NIES-2133 / IAM M-273 / BP-1).